Here is a 192-residue protein sequence, read N- to C-terminus: Erythropoietin (192 aa).

The N-terminal stretch at 1–26 is a signal peptide; sequence MGVPDCLALPLLVTFLLLSLGLPVLG. Cysteine 33 and cysteine 187 are joined by a disulfide. N-linked (GlcNAc...) asparagine glycans are attached at residues asparagine 50, asparagine 64, and asparagine 109.

Belongs to the EPO/TPO family.

The protein resides in the secreted. In terms of biological role, hormone involved in the regulation of erythrocyte proliferation and differentiation and the maintenance of a physiological level of circulating erythrocyte mass. Binds to EPOR leading to EPOR dimerization and JAK2 activation thereby activating specific downstream effectors, including STAT1 and STAT3. The polypeptide is Erythropoietin (EPO) (Spalax golani (Golan Heights blind mole rat)).